A 307-amino-acid chain; its full sequence is Nucleotide-binding protein ACP_0619 (307 aa).

The segment covering 1–14 (MPAPEPTRRAKKDA) has biased composition (basic and acidic residues). A disordered region spans residues 1–23 (MPAPEPTRRAKKDASASPSPAHP). 33 to 40 (GLSGAGKG) contributes to the ATP binding site. 83-86 (DVRE) serves as a coordination point for GTP.

The protein belongs to the RapZ-like family.

Displays ATPase and GTPase activities. This is Nucleotide-binding protein ACP_0619 from Acidobacterium capsulatum (strain ATCC 51196 / DSM 11244 / BCRC 80197 / JCM 7670 / NBRC 15755 / NCIMB 13165 / 161).